The following is a 58-amino-acid chain: Glutathione reductase (58 aa).

Positions 5, 12, 13, and 21 each coordinate FAD. Cysteines 13 and 18 form a disulfide.

This sequence belongs to the class-I pyridine nucleotide-disulfide oxidoreductase family. As to quaternary structure, homodimer. The cofactor is FAD.

It localises to the cytoplasm. It catalyses the reaction 2 glutathione + NADP(+) = glutathione disulfide + NADPH + H(+). Catalyzes the reduction of glutathione disulfide (GSSG) to reduced glutathione (GSH). Constitutes the major mechanism to maintain a high GSH:GSSG ratio in the cytosol. In Spirulina sp, this protein is Glutathione reductase.